The primary structure comprises 252 residues: Phosphoglycolate phosphatase (252 aa).

D13 (nucleophile) is an active-site residue. Mg(2+) contacts are provided by D13, D15, and D192.

This sequence belongs to the HAD-like hydrolase superfamily. CbbY/CbbZ/Gph/YieH family. Monomer. It depends on Mg(2+) as a cofactor. Chloride is required as a cofactor.

It carries out the reaction 2-phosphoglycolate + H2O = glycolate + phosphate. Its pathway is organic acid metabolism; glycolate biosynthesis; glycolate from 2-phosphoglycolate: step 1/1. Specifically catalyzes the dephosphorylation of 2-phosphoglycolate. Is involved in the dissimilation of the intracellular 2-phosphoglycolate formed during the DNA repair of 3'-phosphoglycolate ends, a major class of DNA lesions induced by oxidative stress. This chain is Phosphoglycolate phosphatase, found in Shigella sonnei (strain Ss046).